The primary structure comprises 491 residues: Aspartyl/glutamyl-tRNA(Asn/Gln) amidotransferase subunit B (491 aa).

It belongs to the GatB/GatE family. GatB subfamily. In terms of assembly, heterotrimer of A, B and C subunits.

It carries out the reaction L-glutamyl-tRNA(Gln) + L-glutamine + ATP + H2O = L-glutaminyl-tRNA(Gln) + L-glutamate + ADP + phosphate + H(+). The enzyme catalyses L-aspartyl-tRNA(Asn) + L-glutamine + ATP + H2O = L-asparaginyl-tRNA(Asn) + L-glutamate + ADP + phosphate + 2 H(+). Functionally, allows the formation of correctly charged Asn-tRNA(Asn) or Gln-tRNA(Gln) through the transamidation of misacylated Asp-tRNA(Asn) or Glu-tRNA(Gln) in organisms which lack either or both of asparaginyl-tRNA or glutaminyl-tRNA synthetases. The reaction takes place in the presence of glutamine and ATP through an activated phospho-Asp-tRNA(Asn) or phospho-Glu-tRNA(Gln). This is Aspartyl/glutamyl-tRNA(Asn/Gln) amidotransferase subunit B from Prochlorococcus marinus (strain NATL2A).